The sequence spans 281 residues: Cytochrome bc1 complex cytochrome c subunit (281 aa).

A helical transmembrane segment spans residues 17–37; the sequence is AAGAMALAVGLTGAGILVNAV. Cytochrome c domains lie at 52-132 and 162-240; these read ALIQ…EANG and ADVA…KSAK. Residues cysteine 65, cysteine 68, histidine 69, cysteine 175, cysteine 178, and histidine 179 each contribute to the heme c site. Residues 259–279 form a helical membrane-spanning segment; the sequence is GMMMWLVGIVVLVAAAMWIGS.

As to quaternary structure, the cytochrome bc1 complex is composed of a cytochrome b (QcrB), the Rieske iron-sulfur protein (QcrA) and a diheme cytochrome c (QcrC) subunit. The bc1 complex forms a supercomplex with cytochrome c oxidase (cytochrome aa3). Post-translationally, binds 2 heme c groups covalently per subunit.

Its subcellular location is the cell membrane. It carries out the reaction a quinol + 2 Fe(III)-[cytochrome c](out) = a quinone + 2 Fe(II)-[cytochrome c](out) + 2 H(+)(out). Functionally, cytochrome c1 subunit of the cytochrome bc1 complex, an essential component of the respiratory electron transport chain required for ATP synthesis. The bc1 complex catalyzes the oxidation of menaquinol and the reduction of cytochrome c in the respiratory chain. The bc1 complex operates through a Q-cycle mechanism that couples electron transfer to generation of the proton gradient that drives ATP synthesis. The chain is Cytochrome bc1 complex cytochrome c subunit (qcrC) from Corynebacterium diphtheriae (strain ATCC 700971 / NCTC 13129 / Biotype gravis).